The chain runs to 188 residues: Peptidyl-tRNA hydrolase (188 aa).

F15 contacts tRNA. H20 (proton acceptor) is an active-site residue. The tRNA site is built by Y64, N66, and N112.

It belongs to the PTH family. Monomer.

The protein localises to the cytoplasm. It catalyses the reaction an N-acyl-L-alpha-aminoacyl-tRNA + H2O = an N-acyl-L-amino acid + a tRNA + H(+). In terms of biological role, hydrolyzes ribosome-free peptidyl-tRNAs (with 1 or more amino acids incorporated), which drop off the ribosome during protein synthesis, or as a result of ribosome stalling. Catalyzes the release of premature peptidyl moieties from peptidyl-tRNA molecules trapped in stalled 50S ribosomal subunits, and thus maintains levels of free tRNAs and 50S ribosomes. The protein is Peptidyl-tRNA hydrolase of Borreliella afzelii (strain PKo) (Borrelia afzelii).